The following is a 621-amino-acid chain: Chaperone protein DnaK (621 aa).

At threonine 179 the chain carries Phosphothreonine; by autocatalysis. Positions serine 583–aspartate 605 are enriched in polar residues. Residues serine 583–glutamate 621 form a disordered region. A compositionally biased stretch (basic and acidic residues) spans asparagine 606 to glutamate 621.

This sequence belongs to the heat shock protein 70 family.

Its function is as follows. Acts as a chaperone. This chain is Chaperone protein DnaK, found in Endomicrobium trichonymphae.